Here is a 540-residue protein sequence, read N- to C-terminus: ATP-dependent RNA helicase DBP3 (540 aa).

Positions 1-35 (MTVEESKKRKLTDDVAIKQNEKKIKKDKKVKDKKD) are enriched in basic and acidic residues. The tract at residues 1-89 (MTVEESKKRK…TTEQPSKQVK (89 aa)) is disordered. The span at 36 to 52 (KKDKKDKKDKKEKKEKK) shows a compositional bias: basic residues. Composition is skewed to basic and acidic residues over residues 53–62 (EKKEKNDKKD) and 68–79 (DKKAEQVDKLSE). The Q motif motif lies at 130–156 (LAFNQISLDKEVQNEIAKFPKPTPIQA). A Helicase ATP-binding domain is found at 159–332 (WPYLLSGKDV…STFMKEPVKV (174 aa)). 172–179 (AETGSGKT) lines the ATP pocket. The DEAD box signature appears at 279–282 (DEAD). In terms of domain architecture, Helicase C-terminal spans 361 to 510 (KLLDLLKKYQ…PVPEDLIKFG (150 aa)).

This sequence belongs to the DEAD box helicase family. DDX5/DBP2 subfamily.

It localises to the nucleus. The protein localises to the nucleolus. The enzyme catalyses ATP + H2O = ADP + phosphate + H(+). In terms of biological role, ATP-dependent RNA helicase required for 60S ribosomal subunit synthesis. Involved in efficient pre-rRNA processing, predominantly at site A3, which is necessary for the normal formation of 25S and 5.8S rRNAs. The chain is ATP-dependent RNA helicase DBP3 (DBP3) from Candida glabrata (strain ATCC 2001 / BCRC 20586 / JCM 3761 / NBRC 0622 / NRRL Y-65 / CBS 138) (Yeast).